Reading from the N-terminus, the 102-residue chain is ATP synthase subunit c (102 aa).

2 consecutive transmembrane segments (helical) span residues 34–54 (IGAG…GYIF) and 80–100 (AVSE…IFVA).

Belongs to the ATPase C chain family. F-type ATPases have 2 components, F(1) - the catalytic core - and F(0) - the membrane proton channel. F(1) has five subunits: alpha(3), beta(3), gamma(1), delta(1), epsilon(1). F(0) has three main subunits: a(1), b(2) and c(10-14). The alpha and beta chains form an alternating ring which encloses part of the gamma chain. F(1) is attached to F(0) by a central stalk formed by the gamma and epsilon chains, while a peripheral stalk is formed by the delta and b chains.

Its subcellular location is the cell membrane. Its function is as follows. F(1)F(0) ATP synthase produces ATP from ADP in the presence of a proton or sodium gradient. F-type ATPases consist of two structural domains, F(1) containing the extramembraneous catalytic core and F(0) containing the membrane proton channel, linked together by a central stalk and a peripheral stalk. During catalysis, ATP synthesis in the catalytic domain of F(1) is coupled via a rotary mechanism of the central stalk subunits to proton translocation. Key component of the F(0) channel; it plays a direct role in translocation across the membrane. A homomeric c-ring of between 10-14 subunits forms the central stalk rotor element with the F(1) delta and epsilon subunits. In Mycoplasma genitalium (strain ATCC 33530 / DSM 19775 / NCTC 10195 / G37) (Mycoplasmoides genitalium), this protein is ATP synthase subunit c.